The primary structure comprises 739 residues: MPRKMVVIFGASNILWMVFAVSQASKMEIFLEPRVAAQIGDVISLTCSTTGCETPSFSWRTQIDSPLNGKVKNEGNNSTLTMDPVSFNNEHAYLCTATCGSKKLEKGIQVEIYSFPKDPEIQLSGPLEVGKPVTVTCLVRDVYPFDRLEMNLLNGNDLLQSKDFLEPMEKKSLETKSLEVTFTPTNEDIGKGLVCRAQLHMDEIDFEPKERETTKELQVYISPRNTFISVTPSMRLQEGGSVTMTCASEGLPPPQIFWSKKLDNGNLQLLSGNATLTLIAMRLEDSGTYVCEGVNEVGKDGKEVELIVQEKPFTVEISPGPQIIAQIGDSVVLTCGVTDCESPSFSWRTQIDSPLSGTVKVEGAKSTLTLSPVNLENEHSYLCTVTCGHKKLEKGIKVDLYSFPRDPEVEMSGLLVDGNPVTVSCEVPNVYPSDRLEIELFKGETIIESKSFLEDMDKKSLETKSLEMTFIPTTEDTGKVLVCLAKLHIDEMEFEPKQRQSTQTLYVNVAPRDTTVVVSPSSIVEEGSPVNMTCSSDGLPAPNILWSRRLSNGRLQSLSEDPILTLTSAKMEDSGIYVCEGINQAGISRKEVELIIQVAPKDIQLIAFPSESVKEGDTVIISCTCGNVPKTWIILKKKAETGDTVLKSRDGAYTIHKVQLEDAGVYECESKNEAGLQLRSLTLDVKGRENNKDYFSPELLVLYCASSLIIPAIGMIIYFARRANMKGSYSLVEAQKSKV.

An N-terminal signal peptide occupies residues M1–A24. Ig-like C2-type domains lie at S25 to E105, Q109 to E212, P223 to Q309, P312 to D399, E408 to Y506, P511 to I595, and P600 to D684. Topologically, residues S25–E698 are extracellular. 5 disulfide bridges follow: C47-C95, C52-C99, C137-C195, C246-C291, and C335-C383. N76 and N77 each carry an N-linked (GlcNAc...) asparagine glycan. N-linked (GlcNAc...) asparagine glycosylation is present at N273. Residue N531 is glycosylated (N-linked (GlcNAc...) asparagine). A disulfide bridge links C534 with C579. A helical membrane pass occupies residues L699–A720. Over R721–V739 the chain is Cytoplasmic.

In terms of processing, cleaved by the metalloproteinase ADAM17 to generate the soluble form. Post-translationally, sialoglycoprotein. Ubiquitinated by TRIM65 via 'Lys-48'-linked ubiquitination; leading to proteasomal degradation.

It is found in the cell membrane. It localises to the secreted. Its function is as follows. Cell adhesion glycoprotein predominantly expressed on the surface of endothelial cells that plays an important role in immune surveillance and inflammation. Acts as a major regulator of leukocyte adhesion to the endothelium through interaction with different types of integrins. During inflammatory responses, binds ligands on the surface of activated endothelial cells to initiate the activation of calcium channels and the plasma membrane-associated small GTPase RAC1 leading to leukocyte transendothelial migration. Also serves as a quality-control checkpoint for entry into bone marrow by providing a 'don't-eat-me' stamping in the context of major histocompatibility complex (MHC) class-I presentation. The protein is Vascular cell adhesion protein 1 (VCAM1) of Canis lupus familiaris (Dog).